We begin with the raw amino-acid sequence, 486 residues long: Catalase (486 aa).

Positions 1–28 are disordered; that stretch reads MENKKLTAANGRPIADNQNSQTAGPRGP. Active-site residues include His54 and Asn127. Tyr337 provides a ligand contact to heme.

Belongs to the catalase family. As to quaternary structure, homodimer. It depends on heme as a cofactor.

The enzyme catalyses 2 H2O2 = O2 + 2 H2O. Decomposes hydrogen peroxide into water and oxygen; serves to protect cells from the toxic effects of hydrogen peroxide. May be involved in aerotolerance of B.fragilis. This Bacteroides fragilis (strain YCH46) protein is Catalase (katA).